The sequence spans 430 residues: Gustatory receptor-like 43a (430 aa).

Over 1 to 31 (MSTGSHSPEAMWSATNFRRHQRKPNQVLHRW) the chain is Cytoplasmic. Residues 32–52 (FFKGSAWIIYAIACGLHFFKL) form a helical membrane-spanning segment. At 53–79 (HYNERTNQVEESQYHRIWSKIVVVLKV) the chain is on the extracellular side. The helical transmembrane segment at 80–100 (ILLASPYLQYFVLGLGIYIHI) threads the bilayer. Topologically, residues 101–110 (TLVQDSKAQN) are cytoplasmic. A helical membrane pass occupies residues 111 to 131 (FLMSLIVLGIVIGVLRRLLIF). Residues 132 to 168 (LHLKRDRRFLKHTVNEILHITSALEQKFGMEYKCDST) lie on the Extracellular side of the membrane. The helical transmembrane segment at 169-189 (LLVVYLAKLWILTVMLDSLWY) threads the bilayer. Over 190 to 277 (KPYFLSSIFL…RDNVSWLSTS (88 aa)) the chain is Cytoplasmic. Residues 278-298 (VYLMIFTCIFNAELLIECSLF) traverse the membrane as a helical segment. Residues 299–306 (AGDELENK) are Extracellular-facing. A helical transmembrane segment spans residues 307 to 327 (IYIITDGCLGPVCVPILYVLI). Over 328-396 (LGMCTDRFRD…IILDITCDRE (69 aa)) the chain is Cytoplasmic. A helical membrane pass occupies residues 397 to 417 (FVMDYIVTVILTALSLVQYTI). The Extracellular segment spans residues 418–430 (STGGNISECVTHK). An N-linked (GlcNAc...) asparagine glycan is attached at Asn-422.

Its subcellular location is the cell membrane. This chain is Gustatory receptor-like 43a, found in Drosophila melanogaster (Fruit fly).